Here is a 569-residue protein sequence, read N- to C-terminus: Sulfite reductase [NADPH] hemoprotein beta-component (569 aa).

The [4Fe-4S] cluster site is built by C433, C439, C478, and C482. C482 lines the siroheme pocket.

This sequence belongs to the nitrite and sulfite reductase 4Fe-4S domain family. Alpha(8)-beta(8). The alpha component is a flavoprotein, the beta component is a hemoprotein. Requires siroheme as cofactor. It depends on [4Fe-4S] cluster as a cofactor.

The catalysed reaction is hydrogen sulfide + 3 NADP(+) + 3 H2O = sulfite + 3 NADPH + 4 H(+). It functions in the pathway sulfur metabolism; hydrogen sulfide biosynthesis; hydrogen sulfide from sulfite (NADPH route): step 1/1. Functionally, component of the sulfite reductase complex that catalyzes the 6-electron reduction of sulfite to sulfide. This is one of several activities required for the biosynthesis of L-cysteine from sulfate. This Blochmanniella floridana protein is Sulfite reductase [NADPH] hemoprotein beta-component.